A 461-amino-acid polypeptide reads, in one-letter code: Probable lipid II flippase MurJ (461 aa).

12 helical membrane passes run 5–25, 51–71, 96–116, 123–143, 156–176, 229–249, 258–278, 293–313, 337–357, 372–392, 402–422, and 429–449; these read ILGA…PNLF, FASL…LLVA, IVAI…LGAL, FFAS…ALLI, LSYG…YPLV, IASF…VSYL, LPLA…IAIA, KAWF…IMLS, VFSL…FSLW, LISL…LGVL, GLFL…LGII, and LVIL…KSWV.

Belongs to the MurJ/MviN family.

It is found in the cell inner membrane. It functions in the pathway cell wall biogenesis; peptidoglycan biosynthesis. Its function is as follows. Involved in peptidoglycan biosynthesis. Transports lipid-linked peptidoglycan precursors from the inner to the outer leaflet of the cytoplasmic membrane. This is Probable lipid II flippase MurJ from Helicobacter pylori (strain ATCC 700392 / 26695) (Campylobacter pylori).